Consider the following 173-residue polypeptide: Crossover junction endodeoxyribonuclease RuvC (173 aa).

Residues D8, E67, and D139 contribute to the active site. Residues D8, E67, and D139 each coordinate Mg(2+).

The protein belongs to the RuvC family. In terms of assembly, homodimer which binds Holliday junction (HJ) DNA. The HJ becomes 2-fold symmetrical on binding to RuvC with unstacked arms; it has a different conformation from HJ DNA in complex with RuvA. In the full resolvosome a probable DNA-RuvA(4)-RuvB(12)-RuvC(2) complex forms which resolves the HJ. Mg(2+) is required as a cofactor.

The protein localises to the cytoplasm. It carries out the reaction Endonucleolytic cleavage at a junction such as a reciprocal single-stranded crossover between two homologous DNA duplexes (Holliday junction).. Its function is as follows. The RuvA-RuvB-RuvC complex processes Holliday junction (HJ) DNA during genetic recombination and DNA repair. Endonuclease that resolves HJ intermediates. Cleaves cruciform DNA by making single-stranded nicks across the HJ at symmetrical positions within the homologous arms, yielding a 5'-phosphate and a 3'-hydroxyl group; requires a central core of homology in the junction. The consensus cleavage sequence is 5'-(A/T)TT(C/G)-3'. Cleavage occurs on the 3'-side of the TT dinucleotide at the point of strand exchange. HJ branch migration catalyzed by RuvA-RuvB allows RuvC to scan DNA until it finds its consensus sequence, where it cleaves and resolves the cruciform DNA. The polypeptide is Crossover junction endodeoxyribonuclease RuvC (Citrobacter koseri (strain ATCC BAA-895 / CDC 4225-83 / SGSC4696)).